Here is a 350-residue protein sequence, read N- to C-terminus: Histidinol-phosphate aminotransferase 1 (350 aa).

Lysine 211 carries the post-translational modification N6-(pyridoxal phosphate)lysine.

The protein belongs to the class-II pyridoxal-phosphate-dependent aminotransferase family. Histidinol-phosphate aminotransferase subfamily. In terms of assembly, homodimer. It depends on pyridoxal 5'-phosphate as a cofactor.

It carries out the reaction L-histidinol phosphate + 2-oxoglutarate = 3-(imidazol-4-yl)-2-oxopropyl phosphate + L-glutamate. It participates in amino-acid biosynthesis; L-histidine biosynthesis; L-histidine from 5-phospho-alpha-D-ribose 1-diphosphate: step 7/9. The chain is Histidinol-phosphate aminotransferase 1 from Trichormus variabilis (strain ATCC 29413 / PCC 7937) (Anabaena variabilis).